We begin with the raw amino-acid sequence, 420 residues long: Dual-specificity RNA methyltransferase RlmN (420 aa).

Glu115 acts as the Proton acceptor in catalysis. The Radical SAM core domain occupies 121 to 388 (DADRGTLCVS…APIRTPRGRD (268 aa)). A disulfide bridge connects residues Cys128 and Cys393. Cys135, Cys139, and Cys142 together coordinate [4Fe-4S] cluster. S-adenosyl-L-methionine is bound by residues 217 to 218 (GE), Ser249, 271 to 273 (SLH), and Asn350. The S-methylcysteine intermediate role is filled by Cys393.

This sequence belongs to the radical SAM superfamily. RlmN family. [4Fe-4S] cluster is required as a cofactor.

It is found in the cytoplasm. It catalyses the reaction adenosine(2503) in 23S rRNA + 2 reduced [2Fe-2S]-[ferredoxin] + 2 S-adenosyl-L-methionine = 2-methyladenosine(2503) in 23S rRNA + 5'-deoxyadenosine + L-methionine + 2 oxidized [2Fe-2S]-[ferredoxin] + S-adenosyl-L-homocysteine. The enzyme catalyses adenosine(37) in tRNA + 2 reduced [2Fe-2S]-[ferredoxin] + 2 S-adenosyl-L-methionine = 2-methyladenosine(37) in tRNA + 5'-deoxyadenosine + L-methionine + 2 oxidized [2Fe-2S]-[ferredoxin] + S-adenosyl-L-homocysteine. Functionally, specifically methylates position 2 of adenine 2503 in 23S rRNA and position 2 of adenine 37 in tRNAs. m2A2503 modification seems to play a crucial role in the proofreading step occurring at the peptidyl transferase center and thus would serve to optimize ribosomal fidelity. In Sphingopyxis alaskensis (strain DSM 13593 / LMG 18877 / RB2256) (Sphingomonas alaskensis), this protein is Dual-specificity RNA methyltransferase RlmN.